The primary structure comprises 1530 residues: Glutamate-rich protein 3 (1530 aa).

9 disordered regions span residues 165 to 187, 408 to 429, 475 to 661, 673 to 724, 773 to 870, 923 to 1146, 1167 to 1334, 1360 to 1383, and 1425 to 1530; these read RLQP…RSRS, SLPK…KAEG, MTSK…PMPI, TEKG…GLEE, EAME…AVGL, REAA…LLGE, LENI…GMGG, LAGS…DVAE, and YTTE…NVQV. Basic and acidic residues-rich tracts occupy residues 415-429, 531-545, and 552-562; these read EKST…KAEG, LDDK…KESE, and PDARDNVKDEN. A compositionally biased stretch (acidic residues) spans 563–574; that stretch reads DGCSESELEEDK. Residues 581 to 592 show a composition bias toward low complexity; that stretch reads SSTSSRSHPYSS. Over residues 600 to 616 the composition is skewed to basic and acidic residues; sequence VGDREAHTDSSTDESAR. Over residues 638–647 the composition is skewed to acidic residues; that stretch reads ESLEIEIEDQ. 2 stretches are compositionally biased toward basic and acidic residues: residues 684–717 and 773–787; these read LSEK…DKKA and EAME…RDAD. Over residues 834-845 the composition is skewed to low complexity; sequence GIERGAEGAAEA. The span at 943 to 958 shows a compositional bias: acidic residues; the sequence is GESEEEASIDLEDTGP. 3 stretches are compositionally biased toward basic and acidic residues: residues 979-992, 1039-1116, and 1173-1212; these read EPAK…RTET, EANR…EETK, and LRKE…RQDG. The segment covering 1213–1225 has biased composition (low complexity); the sequence is EGALAAPEAEPAG. The segment covering 1289-1300 has biased composition (acidic residues); sequence AVDEDPEEEEDK. Basic and acidic residues-rich tracts occupy residues 1464–1487 and 1502–1511; these read GRQE…RELS and DFTETREKQQ. Positions 1517–1530 are enriched in polar residues; sequence ESETADVSPNNVQV.

In terms of assembly, interacts with CLTC/clathrin heavy chain 1, AP2A2/AP-2 complex subunit alpha-2, and PIK3C2A/phosphatidylinositol 4-phosphate 3-kinase C2 domain-containing subunit alpha. In terms of tissue distribution, expressed in dopaminergic and serotoninergic neurons.

The protein localises to the cell projection. It localises to the cilium. It is found in the cytoplasm. Its function is as follows. Component of the primary cilium that controls cilium formation and length. May function within retrograde intraflagellar transport (IFT)-associated pathways to remove signaling proteins from primary cilia. Also involved in neuronal vesicle biogenesis and neurotransmitter vesicular function. This is Glutamate-rich protein 3 from Homo sapiens (Human).